A 229-amino-acid polypeptide reads, in one-letter code: Multiple organellar RNA editing factor 5, chloroplastic/mitochondrial (229 aa).

The N-terminal 57 residues, 1–57, are a transit peptide targeting the chloroplast and mitochondrion; the sequence is MAKTLARSTASRITKRLISTSGATTPSPSYILSRRSTPVFSHAVGFISSLNRFTTIR.

Belongs to the MORF family. As to quaternary structure, homodimer and heterodimers with MORF8/RIP1, MORF3/RIP3, MORF6/RIP6, MORF7/RIP7 and MORF9/RIP9.

It localises to the mitochondrion. It is found in the plastid. The protein resides in the chloroplast. In terms of biological role, involved in organellar RNA editing. Required for the processing of few RNA editing sites in mitochondria. The chain is Multiple organellar RNA editing factor 5, chloroplastic/mitochondrial from Arabidopsis thaliana (Mouse-ear cress).